The chain runs to 308 residues: Protoheme IX farnesyltransferase (308 aa).

8 helical membrane passes run Val31–Val51, Pro53–Leu73, His102–Thr122, Leu124–Leu144, Thr149–Ser169, Ala170–Thr190, Leu242–Met262, and Tyr288–Leu308.

Belongs to the UbiA prenyltransferase family. Protoheme IX farnesyltransferase subfamily.

It is found in the cell membrane. It carries out the reaction heme b + (2E,6E)-farnesyl diphosphate + H2O = Fe(II)-heme o + diphosphate. It functions in the pathway porphyrin-containing compound metabolism; heme O biosynthesis; heme O from protoheme: step 1/1. Functionally, converts heme B (protoheme IX) to heme O by substitution of the vinyl group on carbon 2 of heme B porphyrin ring with a hydroxyethyl farnesyl side group. The protein is Protoheme IX farnesyltransferase of Mycolicibacterium smegmatis (strain ATCC 700084 / mc(2)155) (Mycobacterium smegmatis).